We begin with the raw amino-acid sequence, 397 residues long: Geranylgeranyl pyrophosphate synthase AN1592 (397 aa).

Positions Met1–Ile67 are disordered. Positions Ser13–Ile42 are enriched in basic and acidic residues. Low complexity predominate over residues Ser52 to Ile67. Residues Lys120, Arg123, and His152 each coordinate isopentenyl diphosphate. 2 residues coordinate Mg(2+): Asp159 and Asp163. Arg168 is a binding site for dimethylallyl diphosphate. Arg169 contributes to the isopentenyl diphosphate binding site. Residues Lys247, Thr248, and Gln281 each coordinate dimethylallyl diphosphate. Asp284 lines the Mg(2+) pocket. Residues Asn288, Lys298, and Lys308 each contribute to the dimethylallyl diphosphate site.

Belongs to the FPP/GGPP synthase family. Mg(2+) is required as a cofactor.

It carries out the reaction isopentenyl diphosphate + dimethylallyl diphosphate = (2E)-geranyl diphosphate + diphosphate. The enzyme catalyses isopentenyl diphosphate + (2E)-geranyl diphosphate = (2E,6E)-farnesyl diphosphate + diphosphate. The catalysed reaction is isopentenyl diphosphate + (2E,6E)-farnesyl diphosphate = (2E,6E,10E)-geranylgeranyl diphosphate + diphosphate. The protein operates within secondary metabolite biosynthesis; terpenoid biosynthesis. Geranylgeranyl pyrophosphate synthase; part of the gene cluster that mediates the biosynthesis of the diterpene ent-pimara-8(14),15-diene (PD). Within the cluster, the HMG-CoA reductase AN1593 functions in the mevalonate pathway, which produces isoprenoid precursors. The geranylgeranyl pyrophosphate (GGPP) synthase AN1592 is needed in the formation of GGPP, the precursor for diterpenes. Lastly, the pimaradiene synthase pbcA performs the 2 cyclization steps that convert GGPP to ent-pimara-8(14),15-diene. The putative roles of the remaining cluster enzymes in ent-pimara-8(14),15-diene biosynthesis is unclear. The cytochrome P450 monooxygenase AN1598, the glutathione S-transferase AN1595, the oxidoreductases AN1596 and AN1597 probably function as decorative enzymes. It is possible that in biological conditions the compound is oxidized to ent-pimara-8(14),15-dien-19-oic acid, which is a bioactive diterpene compound predominant in many plant extracts. The sequence is that of Geranylgeranyl pyrophosphate synthase AN1592 from Emericella nidulans (strain FGSC A4 / ATCC 38163 / CBS 112.46 / NRRL 194 / M139) (Aspergillus nidulans).